Consider the following 212-residue polypeptide: Thymidylate kinase (212 aa).

10-17 contributes to the ATP binding site; sequence GLDGAGKT.

The protein belongs to the thymidylate kinase family.

The enzyme catalyses dTMP + ATP = dTDP + ADP. Phosphorylation of dTMP to form dTDP in both de novo and salvage pathways of dTTP synthesis. The chain is Thymidylate kinase from Blochmanniella pennsylvanica (strain BPEN).